The chain runs to 428 residues: GTPase Obg (428 aa).

An Obg domain is found at Met-1–Leu-158. Positions Ala-117–Gly-143 are disordered. Residues Ala-159–Glu-329 enclose the OBG-type G domain. Residues Gly-165–Ser-172, Phe-190–Val-194, Asp-212–Gly-215, Asn-282–Asp-285, and Ser-310–Val-312 contribute to the GTP site. Residues Ser-172 and Thr-192 each contribute to the Mg(2+) site. The region spanning Thr-350–Asp-428 is the OCT domain.

The protein belongs to the TRAFAC class OBG-HflX-like GTPase superfamily. OBG GTPase family. As to quaternary structure, monomer. Interacts with TasA (AC P54507) in pull-down experiments. Requires Mg(2+) as cofactor.

Its subcellular location is the cytoplasm. Inhibited by GDP; less than 20 uM ppGpp stimulates the GTPase, while higher concentrations inhibit. Its function is as follows. Necessary for the transition from vegetative growth to stage 0 or stage II of sporulation, but sporulation subsequent to these stages is unaffected at 45 degrees Celsius. This ts effect is probably due solely to the E-79 mutation. Required for expression of early sporulation genes, further suggesting a role in the induction of sporulation. Depletion effects on sporulation can be partially suppressed by missense mutations in spo0A. Strains depleted for obg stop growing after about 3 hours and do not induce the sigma-B factor following ethanol stress. It cofractionates with the ribosome and upstream stress response regulators RsbR, RsbS and RsbT in size fractionation columns, suggesting the ribosome might serve as a possible mediator of the activity of obg and the stress induction of sigma-B. In glycerol gradients partially associates with ribosomes; this is stabilized by a nonhydrolyzable GTP-analog and to a lesser extent GTP and GDP. Functionally, an essential GTPase which binds GTP, GDP and possibly (p)ppGpp with moderate affinity, with high nucleotide exchange rates and a fairly low GTP hydrolysis rate. Plays a role in control of the cell cycle, stress response, ribosome biogenesis and in those bacteria that undergo differentiation, in morphogenesis control. In Bacillus subtilis (strain 168), this protein is GTPase Obg.